Reading from the N-terminus, the 193-residue chain is MGFLEDKKRTLMNLELAIREGLVDEEIIPILNKINEIDNYYTTSSCIGRVGIMEIPKDKNPKLYSRWLGKWHHYASYDELFNALKNKKEGYIVFVMNSPILHIACKDIESAKKMLELAIHSGLKASSIKSISDKRVIVEILTTYKVDTPIGEDGEIFVDNNYLKFLLDYSNSKLKRAREILMRWANRLDELKK.

The protein belongs to the TYW3 family.

It catalyses the reaction 4-demethyl-7-[(3S)-3-amino-3-carboxypropyl]wyosine(37) in tRNA(Phe) + S-adenosyl-L-methionine = 7-[(3S)-3-amino-3-carboxypropyl]wyosine(37) in tRNA(Phe) + S-adenosyl-L-homocysteine + H(+). Functionally, S-adenosyl-L-methionine-dependent methyltransferase that acts as a component of the wyosine derivatives biosynthesis pathway. Probably methylates N-4 position of wybutosine-86 to produce wybutosine-72. The chain is tRNA(Phe) 7-((3-amino-3-carboxypropyl)-4-demethylwyosine(37)-N(4))-methyltransferase from Methanocaldococcus jannaschii (strain ATCC 43067 / DSM 2661 / JAL-1 / JCM 10045 / NBRC 100440) (Methanococcus jannaschii).